The following is a 681-amino-acid chain: Translation factor GUF1 homolog, chloroplastic (681 aa).

A chloroplast-targeting transit peptide spans 1–51 (MAMASAMDLSSPPTFFLSGTSTSSPSLRRLSSISVSGFRRHSNRKLQILCQ). In terms of domain architecture, tr-type G spans 84-265 (SNIRNFSIIA…AIVQRIPAPL (182 aa)). GTP contacts are provided by residues 93-100 (AHIDHGKS), 158-162 (DTPGH), and 212-215 (NKID).

Belongs to the TRAFAC class translation factor GTPase superfamily. Classic translation factor GTPase family. LepA subfamily.

The protein localises to the plastid. Its subcellular location is the chloroplast. The enzyme catalyses GTP + H2O = GDP + phosphate + H(+). Promotes chloroplast protein synthesis. May act as a fidelity factor of the translation reaction, by catalyzing a one-codon backward translocation of tRNAs on improperly translocated ribosomes. This is Translation factor GUF1 homolog, chloroplastic from Arabidopsis thaliana (Mouse-ear cress).